The primary structure comprises 500 residues: POU domain, class 3, transcription factor 3 (500 aa).

The segment covering 32 to 52 (GGGGGGGGGGGGAGGGGGGMQ) has biased composition (gly residues). 4 disordered regions span residues 32–63 (GGGGGGGGGGGGAGGGGGGMQPGSAAVTSGAY), 122–190 (WSGS…WGAA), 231–319 (NGML…TPTS), and 461–500 (EKRMTPPGIQQQTPDDVYSQVGTVSADTPPPHHGLQTSVQ). Composition is skewed to pro residues over residues 134 to 146 (QQPPQPPPPPPQG) and 171 to 181 (HLGPPPPPPHQ). The segment covering 241–251 (GGGGGGAGGGA) has biased composition (gly residues). A compositionally biased stretch (basic residues) spans 270-287 (HHHHHHHHAHPHPPHPHH). Over residues 293-303 (HHGGGGGGAGP) the composition is skewed to gly residues. In terms of domain architecture, POU-specific spans 314–388 (EDTPTSDDLE…LLNKWLEEAD (75 aa)). The segment at residues 406–465 (KRKKRTSIEVSVKGALESHFLKCPKPSAQEITNLADSLQLEKEVVRVWFCNRRQKEKRMT) is a DNA-binding region (homeobox). The segment covering 468 to 486 (GIQQQTPDDVYSQVGTVSA) has biased composition (polar residues).

The protein belongs to the POU transcription factor family. Class-3 subfamily. In terms of assembly, homodimer. In terms of tissue distribution, brain.

It is found in the nucleus. Functionally, transcription factor that acts synergistically with SOX11 and SOX4. Plays a role in neuronal development. Is implicated in an enhancer activity at the embryonic met-mesencephalic junction; the enhancer element contains the octamer motif (5'-ATTTGCAT-3'). The sequence is that of POU domain, class 3, transcription factor 3 from Homo sapiens (Human).